The primary structure comprises 315 residues: Olfactory receptor 5M1 (315 aa).

Residues 1–25 (MFSPNHTIVTEFILLGLTDDPVLEK) are Extracellular-facing. A glycan (N-linked (GlcNAc...) asparagine) is linked at Asn-5. Residues 26-46 (ILFGVFLAIYLITLAGNLCMI) traverse the membrane as a helical segment. At 47-54 (LLIRTNSH) the chain is on the cytoplasmic side. The chain crosses the membrane as a helical span at residues 55-75 (LQTPMYFFLGHLSFVDICYSS). The Extracellular segment spans residues 76 to 99 (NVTPNMLHNFLSEQKTISYAGCFT). Residues Cys-97 and Cys-189 are joined by a disulfide bond. The helical transmembrane segment at 100–120 (QCLLFIALVITEFYILASMAL) threads the bilayer. The Cytoplasmic segment spans residues 121–139 (DRYVAICSPLHYSSRMSKN). A helical transmembrane segment spans residues 140–160 (ICVCLVTIPYMYGFLSGFSQS). The Extracellular portion of the chain corresponds to 161–196 (LLTFHLSFCGSLEINHFYCADPPLIMLACSDTRVKK). Residues 197–217 (MAMFVVAGFNLSSSLFIILLS) traverse the membrane as a helical segment. Over 218-237 (YLFIFAAIFRIRSAEGRHKA) the chain is Cytoplasmic. Residues 238–258 (FSTCASHLTIVTLFYGTLFCM) form a helical membrane-spanning segment. The Extracellular portion of the chain corresponds to 259-271 (YVRPPSEKSVEES). Residues 272–292 (KITAVFYTFLSPMLNPLIYSL) traverse the membrane as a helical segment. The Cytoplasmic portion of the chain corresponds to 293–315 (RNTDVILAMQQMIRGKSFHKIAV).

This sequence belongs to the G-protein coupled receptor 1 family.

It is found in the cell membrane. Functionally, odorant receptor. The chain is Olfactory receptor 5M1 (OR5M1) from Homo sapiens (Human).